Consider the following 397-residue polypeptide: ATP phosphoribosyltransferase regulatory subunit (397 aa).

This sequence belongs to the class-II aminoacyl-tRNA synthetase family. HisZ subfamily. As to quaternary structure, heteromultimer composed of HisG and HisZ subunits.

The protein resides in the cytoplasm. The protein operates within amino-acid biosynthesis; L-histidine biosynthesis; L-histidine from 5-phospho-alpha-D-ribose 1-diphosphate: step 1/9. Its function is as follows. Required for the first step of histidine biosynthesis. May allow the feedback regulation of ATP phosphoribosyltransferase activity by histidine. The chain is ATP phosphoribosyltransferase regulatory subunit from Nitrosococcus oceani (strain ATCC 19707 / BCRC 17464 / JCM 30415 / NCIMB 11848 / C-107).